Here is a 119-residue protein sequence, read N- to C-terminus: MNKEQILEAIKAMTVLELNDLVKAIEEEFGVTAAAPVAVVAGGAAAAEEKTEFDVVLASAGAEKIKVIKVVREITGLGLKEAKEVVDNAPKALKEGVSKDEAEEIKTKLEEVGASVEVK.

This sequence belongs to the bacterial ribosomal protein bL12 family. As to quaternary structure, homodimer. Part of the ribosomal stalk of the 50S ribosomal subunit. Forms a multimeric L10(L12)X complex, where L10 forms an elongated spine to which 2 to 4 L12 dimers bind in a sequential fashion. Binds GTP-bound translation factors.

Forms part of the ribosomal stalk which helps the ribosome interact with GTP-bound translation factors. Is thus essential for accurate translation. The polypeptide is Large ribosomal subunit protein bL12 (Lysinibacillus sphaericus (strain C3-41)).